The sequence spans 565 residues: Membrane protein insertase YidC (565 aa).

The next 6 membrane-spanning stretches (helical) occupy residues 6–26, 348–368, 370–390, 437–457, 479–499, and 516–536; these read VLLIFSWLTVATLLWMDWGKN, LMALIGQGLFWILSHLNSLLH, WGWAIVGLVVLLRIAMYPLSA, GGCFPILIQMPIFFALYWVLV, PYFILPLLNIVIMWATQKLTP, and PLIFGVMMAFVPSGLALYWVI.

It belongs to the OXA1/ALB3/YidC family. Type 1 subfamily. Interacts with the Sec translocase complex via SecD. Specifically interacts with transmembrane segments of nascent integral membrane proteins during membrane integration.

It is found in the cell inner membrane. Functionally, required for the insertion and/or proper folding and/or complex formation of integral membrane proteins into the membrane. Involved in integration of membrane proteins that insert both dependently and independently of the Sec translocase complex, as well as at least some lipoproteins. Aids folding of multispanning membrane proteins. The polypeptide is Membrane protein insertase YidC (Xylella fastidiosa (strain M12)).